The following is an 89-amino-acid chain: Small ribosomal subunit protein uS17 (89 aa).

The protein belongs to the universal ribosomal protein uS17 family. In terms of assembly, part of the 30S ribosomal subunit.

In terms of biological role, one of the primary rRNA binding proteins, it binds specifically to the 5'-end of 16S ribosomal RNA. This is Small ribosomal subunit protein uS17 from Aromatoleum aromaticum (strain DSM 19018 / LMG 30748 / EbN1) (Azoarcus sp. (strain EbN1)).